We begin with the raw amino-acid sequence, 304 residues long: UDP-N-acetylenolpyruvoylglucosamine reductase (304 aa).

The FAD-binding PCMH-type domain occupies 34–198 (IGGKADFLVW…LEVVFALRPG (165 aa)). The active site involves arginine 177. The Proton donor role is filled by serine 227. Residue glutamate 297 is part of the active site.

This sequence belongs to the MurB family. It depends on FAD as a cofactor.

The protein resides in the cytoplasm. The catalysed reaction is UDP-N-acetyl-alpha-D-muramate + NADP(+) = UDP-N-acetyl-3-O-(1-carboxyvinyl)-alpha-D-glucosamine + NADPH + H(+). It functions in the pathway cell wall biogenesis; peptidoglycan biosynthesis. Cell wall formation. This Geobacillus kaustophilus (strain HTA426) protein is UDP-N-acetylenolpyruvoylglucosamine reductase.